Here is a 417-residue protein sequence, read N- to C-terminus: Calreticulin (417 aa).

The N-terminal stretch at 1-17 is a signal peptide; that stretch reads MLLSVPLLLGLLGLAVA. The segment at 18–197 is N-domain; it reads EPAVYFKEQF…NSQVESGSLE (180 aa). Residue glutamine 26 coordinates Ca(2+). Lysine 48 carries the post-translational modification N6-acetyllysine. The Ca(2+) site is built by lysine 62 and lysine 64. Lysine 64 is subject to N6-(2-hydroxyisobutyryl)lysine. An intrachain disulfide couples cysteine 105 to cysteine 137. Residues tyrosine 109, lysine 111, tyrosine 128, and aspartate 135 each contribute to the an alpha-D-glucoside site. Lysine 159 carries the post-translational modification N6-acetyllysine. Residues 191–202 form a 1-1 repeat; it reads VESGSLEDDWDF. The interval 191-255 is 4 X approximate repeats; sequence VESGSLEDDW…DAKKPEDWDE (65 aa). The interval 193–278 is disordered; it reads SGSLEDDWDF…PEYKGEWKPR (86 aa). The segment at 198–308 is P-domain; that stretch reads DDWDFLPPKK…YSPDPSIYAY (111 aa). The segment covering 207-251 has biased composition (basic and acidic residues); sequence KIKDPDASKPEDWDERAKIDDPTDSKPEDWDKPEHIPDPDAKKPE. Residue lysine 209 is modified to N6-acetyllysine. 6 repeat units span residues 210–221, 227–238, 244–255, 259–269, 273–283, and 287–297. Residues 237-270 form an interaction with PPIB region; it reads DKPEHIPDPDAKKPEDWDEEMDGEWEPPVIQNPE. Positions 252–261 are enriched in acidic residues; the sequence is DWDEEMDGEW. The tract at residues 259-297 is 3 X approximate repeats; it reads GEWEPPVIQNPEYKGEWKPRQIDNPDYKGTWIHPEIDNP. The C-domain stretch occupies residues 309–417; the sequence is DNFGVLGLDL…DVPGQAKDEL (109 aa). Aspartate 317 serves as a coordination point for an alpha-D-glucoside. Residue aspartate 328 coordinates Ca(2+). Asparagine 344 is a glycosylation site (N-linked (GlcNAc...) asparagine). The tract at residues 350–417 is disordered; the sequence is TKAAEKQMKD…DVPGQAKDEL (68 aa). Residues 352 to 379 are compositionally biased toward basic and acidic residues; the sequence is AAEKQMKDKQDEEQRLKEEEEDKKRKEE. Acidic residues predominate over residues 380–409; it reads EEAEDKEDDEDKDEDEEDEEDKEEDEEEDV. The Prevents secretion from ER signature appears at 414–417; that stretch reads KDEL.

The protein belongs to the calreticulin family. As to quaternary structure, monomer. Component of an EIF2 complex at least composed of CELF1/CUGBP1, CALR, CALR3, EIF2S1, EIF2S2, HSP90B1 and HSPA5. Interacts with PDIA3/ERp57 and SPACA9. Interacts with TRIM21. Interacts with NR3C1. Interacts with PPIB. Interacts (via P-domain) with PDIA5. Interacts with GABARAP. Interacts with HLA-E-B2M and HLA-G-B2M complexes. Interacts with HLA-F. Interacts with CLCC1.

The protein localises to the endoplasmic reticulum lumen. Its subcellular location is the cytoplasm. It is found in the cytosol. The protein resides in the secreted. It localises to the extracellular space. The protein localises to the extracellular matrix. Its subcellular location is the cell surface. It is found in the sarcoplasmic reticulum lumen. The protein resides in the cytoplasmic vesicle. It localises to the secretory vesicle. The protein localises to the cortical granule. Its subcellular location is the cytolytic granule. Functionally, calcium-binding chaperone that promotes folding, oligomeric assembly and quality control in the endoplasmic reticulum (ER) via the calreticulin/calnexin cycle. This lectin interacts transiently with almost all of the monoglucosylated glycoproteins that are synthesized in the ER. Interacts with the DNA-binding domain of NR3C1 and mediates its nuclear export. Involved in maternal gene expression regulation. May participate in oocyte maturation via the regulation of calcium homeostasis. Present in the cortical granules of non-activated oocytes, is exocytosed during the cortical reaction in response to oocyte activation and might participate in the block to polyspermy. The protein is Calreticulin of Homo sapiens (Human).